The following is a 246-amino-acid chain: UPF0309 protein TTE0306 (246 aa).

The SIS domain maps to 31 to 212 (ITESLISEDS…EAEIITNMLE (182 aa)).

This sequence belongs to the UPF0309 family.

This Caldanaerobacter subterraneus subsp. tengcongensis (strain DSM 15242 / JCM 11007 / NBRC 100824 / MB4) (Thermoanaerobacter tengcongensis) protein is UPF0309 protein TTE0306.